Reading from the N-terminus, the 232-residue chain is Peptidoglycan-recognition protein LB (232 aa).

The first 15 residues, 1-15, serve as a signal peptide directing secretion; sequence MTALGLVLLSMMGYS. An N-acetylmuramoyl-L-alanine amidase domain is found at 53-179; the sequence is APYVIIHHSY…RQVRDTECPG (127 aa). Zn(2+) is bound at residue His-59. Cys-67 and Cys-73 are joined by a disulfide. His-169 and Cys-177 together coordinate Zn(2+). An N-linked (GlcNAc...) asparagine glycan is attached at Asn-196. Residues 213–232 form a disordered region; it reads HPQAAAPQKPHQSPPAAPKV.

This sequence belongs to the N-acetylmuramoyl-L-alanine amidase 2 family. In terms of assembly, monomer. It depends on Zn(2+) as a cofactor. Widely expressed.

Its subcellular location is the secreted. The catalysed reaction is Hydrolyzes the link between N-acetylmuramoyl residues and L-amino acid residues in certain cell-wall glycopeptides.. In terms of biological role, N-acetylmuramyl-L-alanine amidase involved in innate immunity by degrading bacterial peptidoglycans (PGN). Probably plays a scavenger role by digesting biologically active PGN into biologically inactive fragments. Has no direct bacteriolytic activity. The polypeptide is Peptidoglycan-recognition protein LB (PGRP-LB) (Drosophila melanogaster (Fruit fly)).